A 353-amino-acid chain; its full sequence is Nicotinate-nucleotide--dimethylbenzimidazole phosphoribosyltransferase (353 aa).

The active-site Proton acceptor is Glu-319.

The protein belongs to the CobT family.

It carries out the reaction 5,6-dimethylbenzimidazole + nicotinate beta-D-ribonucleotide = alpha-ribazole 5'-phosphate + nicotinate + H(+). The protein operates within nucleoside biosynthesis; alpha-ribazole biosynthesis; alpha-ribazole from 5,6-dimethylbenzimidazole: step 1/2. Catalyzes the synthesis of alpha-ribazole-5'-phosphate from nicotinate mononucleotide (NAMN) and 5,6-dimethylbenzimidazole (DMB). The chain is Nicotinate-nucleotide--dimethylbenzimidazole phosphoribosyltransferase from Prosthecochloris aestuarii (strain DSM 271 / SK 413).